The primary structure comprises 231 residues: Very-long-chain (3R)-3-hydroxyacyl-CoA dehydratase 4 (231 aa).

Topologically, residues 1–19 (MGPVALPTWLQPRYRKNAY) are cytoplasmic. The helical transmembrane segment at 20–40 (LFIYYLIQFCGHSWIFTNMTV) threads the bilayer. The Lumenal segment spans residues 41–56 (RFFSFGKDSMVDTFYA). A helical membrane pass occupies residues 57–77 (IGLVMQLCQSISLLELLHIYV). The Cytoplasmic segment spans residues 78-112 (GIESNHLLPRILQLTERIIVLFMVITSQEEVQEKY). Residues 113-133 (VVCVLFIFRNLLDMVRYTYSM) form a helical membrane-spanning segment. Residues 134–135 (LS) lie on the Lumenal side of the membrane. The chain crosses the membrane as a helical span at residues 136 to 156 (VIGISYAVLTWFSQTLWMPIY). Y156 is an active-site residue. P157 is a topological domain (cytoplasmic). A helical membrane pass occupies residues 158–178 (LCVLAEAFTIYQSLPYFESFG). Residue E163 is part of the active site. At 179 to 189 (TYSTKLPFDLS) the chain is on the lumenal side. A helical membrane pass occupies residues 190-210 (FYFPYVLKIYLMMLFVGMYFT). Over 211–231 (YNHLYSERRDILRVFPNKKKM) the chain is Cytoplasmic.

This sequence belongs to the very long-chain fatty acids dehydratase HACD family. As to quaternary structure, may interact with enzymes of the ELO family (including ELOVL1); with those enzymes that mediate condensation, the first of the four steps of the reaction cycle responsible for fatty acids elongation, may be part of a larger fatty acids elongase complex.

It is found in the endoplasmic reticulum membrane. The catalysed reaction is a very-long-chain (3R)-3-hydroxyacyl-CoA = a very-long-chain (2E)-enoyl-CoA + H2O. It carries out the reaction (3R)-hydroxyhexadecanoyl-CoA = (2E)-hexadecenoyl-CoA + H2O. It functions in the pathway lipid metabolism; fatty acid biosynthesis. In terms of biological role, catalyzes the third of the four reactions of the long-chain fatty acids elongation cycle. This endoplasmic reticulum-bound enzymatic process, allows the addition of two carbons to the chain of long- and very long-chain fatty acids/VLCFAs per cycle. This enzyme catalyzes the dehydration of the 3-hydroxyacyl-CoA intermediate into trans-2,3-enoyl-CoA, within each cycle of fatty acid elongation. Thereby, it participates in the production of VLCFAs of different chain lengths that are involved in multiple biological processes as precursors of membrane lipids and lipid mediators. The protein is Very-long-chain (3R)-3-hydroxyacyl-CoA dehydratase 4 of Bos taurus (Bovine).